Reading from the N-terminus, the 209-residue chain is MSSTSSTNTDDFITIARIQKTQGRVGEVFSELFTDFPELFEQRHHLYVLPEKGERRELELEDHWFHKGGVVLKFQGIETIDDAEKLLRSEVQIPRQDRAQLEEGATYVSDLVGCELFEIHGSEARKVGVVADVDFSAGEAPLLVVKGDREHLIPYVESFLKSTDFKAKRIEMVLPQGMLELDAPLSKAEKERQKSEADETREAGERRKR.

The region spanning 103-178 is the PRC barrel domain; that stretch reads EGATYVSDLV…RIEMVLPQGM (76 aa). The interval 184–209 is disordered; the sequence is PLSKAEKERQKSEADETREAGERRKR. A compositionally biased stretch (basic and acidic residues) spans 187–209; the sequence is KAEKERQKSEADETREAGERRKR.

This sequence belongs to the RimM family. As to quaternary structure, binds ribosomal protein uS19.

The protein localises to the cytoplasm. In terms of biological role, an accessory protein needed during the final step in the assembly of 30S ribosomal subunit, possibly for assembly of the head region. Essential for efficient processing of 16S rRNA. May be needed both before and after RbfA during the maturation of 16S rRNA. It has affinity for free ribosomal 30S subunits but not for 70S ribosomes. This is Ribosome maturation factor RimM from Koribacter versatilis (strain Ellin345).